The sequence spans 583 residues: Phosphoglucomutase, cytoplasmic 1 (583 aa).

R25 and S124 together coordinate alpha-D-glucose 1,6-bisphosphate. S124 functions as the Phosphoserine intermediate in the catalytic mechanism. Mg(2+) is bound by residues S124, D300, D302, and D304. S124 carries the post-translational modification Phosphoserine. Residues D304, R305, T368, E387, S389, and K400 each coordinate alpha-D-glucose 1,6-bisphosphate.

It belongs to the phosphohexose mutase family. As to quaternary structure, monomer. It depends on Mg(2+) as a cofactor. Post-translationally, autophosphorylated. As to expression, mostly expressed in roots and coleoptiles, and, to a lower extent, in leaves, pollen and developing seeds.

The protein resides in the cytoplasm. It catalyses the reaction alpha-D-glucose 1-phosphate = alpha-D-glucose 6-phosphate. The enzyme catalyses O-phospho-L-seryl-[protein] + alpha-D-glucose 1-phosphate = alpha-D-glucose 1,6-bisphosphate + L-seryl-[protein]. The catalysed reaction is alpha-D-glucose 1,6-bisphosphate + L-seryl-[protein] = O-phospho-L-seryl-[protein] + alpha-D-glucose 6-phosphate. Functionally, catalyzes the reversible isomerization of alpha-D-glucose 1-phosphate to alpha-D-glucose 6-phosphate. The mechanism proceeds via the intermediate compound alpha-D-glucose 1,6-bisphosphate. This enzyme participates in both the breakdown and synthesis of glucose. The polypeptide is Phosphoglucomutase, cytoplasmic 1 (Zea mays (Maize)).